The following is a 374-amino-acid chain: Alanine racemase (374 aa).

Residue K35 is the Proton acceptor; specific for D-alanine of the active site. K35 is subject to N6-(pyridoxal phosphate)lysine. R130 contributes to the substrate binding site. Y253 serves as the catalytic Proton acceptor; specific for L-alanine. M305 contributes to the substrate binding site.

Belongs to the alanine racemase family. Pyridoxal 5'-phosphate serves as cofactor.

It catalyses the reaction L-alanine = D-alanine. It participates in amino-acid biosynthesis; D-alanine biosynthesis; D-alanine from L-alanine: step 1/1. In terms of biological role, catalyzes the interconversion of L-alanine and D-alanine. May also act on other amino acids. The polypeptide is Alanine racemase (alr) (Ralstonia pickettii (strain 12J)).